The chain runs to 367 residues: DNA replication and repair protein RecF (367 aa).

An ATP-binding site is contributed by 30–37 (GANGSGKT).

It belongs to the RecF family.

It is found in the cytoplasm. The RecF protein is involved in DNA metabolism; it is required for DNA replication and normal SOS inducibility. RecF binds preferentially to single-stranded, linear DNA. It also seems to bind ATP. In Pseudomonas fluorescens (strain ATCC BAA-477 / NRRL B-23932 / Pf-5), this protein is DNA replication and repair protein RecF.